The chain runs to 681 residues: MKELQLPEKRKSNTGLSWFPSPRILQVFLVLLGAIVAFLSFSATSSIISSSPKHHSCHDNVEEAAVKYHYSTISSDELPISNERLASLGLTPNQPVKITDIGGKEKSIKGRFLHITDMHPDLYYKENTSIDDTCHRGKPKNDGDRAARFGNAMKGCDGPPDLMYYTLDWIHKNLSDEIDFIIWTGDNVRHDNDRRIPRTEQQIFDMNRQVSELFLKTFKDHESDDPRDLKVKIIPSLGNNDVFPHNLFSPGPTLQTRELYDIWSQFIPPAQQNTFDRYASFFVEAIPGKLAVISLNTLYMFKGNPLVDNCSNKKQPGYKMLLWVGFTLQELRDRGMKVWLSGHVPPIPKNFDSSCSDKLALWLHEYSDIIIGGFYGHMNMDHFIPVDGEKAWDDIANSMAISEYSGFFEQDFLEDAIAAREIRAEGAKPVKKVNYMNGVRDAYYSRISEDVKKLSEKDPLYERYSIVHIGTSIIPTFNPGFRIWEYNITELQTEEEVLHSHQPWDSFFEHLDVEIQKIIEEAEEAEEVEAFEDDEQIDSEIPDVLISKKKKKKGKKGKKNKNSKNWWKTDKTFPKKKPKNLPPGPAYENQLFSPLRFVQYYADLKEIDKQYLKLLKEGKSEDEAASIAFKYQIEYASDDKPYPMKTTLVKDYIELASELSGNDKLWDTFLERAFCSSGYED.

Residues 1 to 23 (MKELQLPEKRKSNTGLSWFPSPR) lie on the Cytoplasmic side of the membrane. The chain crosses the membrane as a helical; Signal-anchor for type II membrane protein span at residues 24–44 (ILQVFLVLLGAIVAFLSFSAT). The Vacuolar portion of the chain corresponds to 45-681 (SSIISSSPKH…RAFCSSGYED (637 aa)). N-linked (GlcNAc...) asparagine glycans are attached at residues Asn-127, Asn-173, Asn-309, and Asn-487. A compositionally biased stretch (basic residues) spans 549 to 562 (KKKKKGKKGKKNKN). The segment at 549 to 585 (KKKKKGKKGKKNKNSKNWWKTDKTFPKKKPKNLPPGP) is disordered.

It belongs to the endopolyphosphatase PPN1 family. It depends on a divalent metal cation as a cofactor. In terms of processing, processing by proteases in the vacuole may be required for activation.

It is found in the vacuole membrane. It carries out the reaction [phosphate](n+1) + n H2O = (n+1) phosphate + n H(+). Its function is as follows. Catalyzes the hydrolysis of inorganic polyphosphate (polyP) chains of many hundreds of phosphate residues into shorter lengths. The chain is Endopolyphosphatase (PPN1) from Kluyveromyces lactis (strain ATCC 8585 / CBS 2359 / DSM 70799 / NBRC 1267 / NRRL Y-1140 / WM37) (Yeast).